A 311-amino-acid polypeptide reads, in one-letter code: Aurora kinase (311 aa).

Positions 20 to 300 constitute a Protein kinase domain; sequence FEIGRFLGRG…IEDILRHPFL (281 aa). Residue lysine 49 coordinates ATP. Aspartate 143 acts as the Proton acceptor in catalysis. The activation loop stretch occupies residues 189–216; it reads DFGWSVHHPTHGGRRRTQCGTLDYLPPE. Residue threonine 205 is modified to Phosphothreonine; by autocatalysis. Positions 280–299 match the Destruction (D)-box motif; it reads MLIRSPEARISIEDILRHPF.

This sequence belongs to the protein kinase superfamily. Ser/Thr protein kinase family. Aurora subfamily. As to quaternary structure, interacts with EB1 (via C-terminal residues 101-238). Post-translationally, phosphorylated in mitosis and cytokinesis. Activated by autophosphorylation at Thr-205.

It localises to the nucleus. The protein localises to the cytoplasm. Its subcellular location is the cytoskeleton. The protein resides in the microtubule organizing center. It is found in the centrosome. It localises to the spindle. The protein localises to the spindle pole. Its subcellular location is the nucleus membrane. The catalysed reaction is L-seryl-[protein] + ATP = O-phospho-L-seryl-[protein] + ADP + H(+). The enzyme catalyses L-threonyl-[protein] + ATP = O-phospho-L-threonyl-[protein] + ADP + H(+). Activated by cell-cycle phase specific phosphorylation. Inhibited by ATP-competitive inhibitors N-[4-[[6-Methoxy-7-[3-(4-morpholinyl)propoxy]-4-quinazolinyl]amino]phenyl]benzamide (ZM447439) and cyclopropanecarboxylic acid-(3-(4-(3-trifluoromethylphenylamino)-pyrimidin-2-ylamino)-phenyl)-amide (CFPPA). Inhibition leads to reduced growth, increased cytokinesis, microtubular defects, and increased ploidy of the cells. In terms of biological role, involved in regulation of the cell cycle. Required for mitotic cell division and cytokinesis. Based on its localization to centrosomes and spindle microtubules, as well as to various cytoskeletal components such as the median body, parental attachment disk, and anterior and posterior-lateral paraflagellar dense rods, may coordinate reorganization and segregation of tubulin-containing structures during mitosis and cytokinesis. May regulate microtubule disassembly by phosphorylating cytoskeletal proteins leading to their destabilization. Phosphorylates EB1 at 'Ser-148' in vitro. Phosphorylates histone H3 in vitro. In Giardia intestinalis (strain ATCC 50803 / WB clone C6) (Giardia lamblia), this protein is Aurora kinase.